A 115-amino-acid polypeptide reads, in one-letter code: Small polypeptide DEVIL 13 (115 aa).

Basic and acidic residues predominate over residues 1-12; the sequence is MEEKWKLSKKDT. The segment at 1 to 89 is disordered; sequence MEEKWKLSKK…SITQKYSSLA (89 aa). Residues 13–65 are compositionally biased toward low complexity; it reads TASSSSSKSKFSRSFSTSASSTKSPIFVRSSSTKCSVPSSSSSSSSSSSISRS. Residues 44–63 traverse the membrane as a helical segment; the sequence is STKCSVPSSSSSSSSSSSIS. The tract at residues 80 to 111 is required for DVL/RTFL small polypeptide activity; it reads SITQKYSSLAKEQKARFYIMRRCVAMLVCWHK.

The protein belongs to the DVL/RTFL small polypeptides family.

The protein localises to the cell membrane. Functionally, small polypeptide acting as a regulatory molecule which coordinates cellular responses required for differentiation, growth and development, probably by restricting polar cell proliferation in lateral organs and coordinating socket cell recruitment and differentiation at trichome sites. The sequence is that of Small polypeptide DEVIL 13 from Arabidopsis thaliana (Mouse-ear cress).